Consider the following 220-residue polypeptide: Small ribosomal subunit protein uS3 (220 aa).

One can recognise a KH type-2 domain in the interval 24-93; the sequence is IKEFLEYRLS…NPQIDVIDVS (70 aa).

The protein belongs to the universal ribosomal protein uS3 family. In terms of assembly, part of the 30S ribosomal subunit.

In terms of biological role, binds the lower part of the 30S subunit head. The polypeptide is Small ribosomal subunit protein uS3 (Pyrobaculum arsenaticum (strain DSM 13514 / JCM 11321 / PZ6)).